Consider the following 229-residue polypeptide: Large ribosomal subunit protein uL1 (229 aa).

This sequence belongs to the universal ribosomal protein uL1 family. As to quaternary structure, part of the 50S ribosomal subunit.

Binds directly to 23S rRNA. The L1 stalk is quite mobile in the ribosome, and is involved in E site tRNA release. In terms of biological role, protein L1 is also a translational repressor protein, it controls the translation of the L11 operon by binding to its mRNA. This is Large ribosomal subunit protein uL1 from Listeria innocua serovar 6a (strain ATCC BAA-680 / CLIP 11262).